The primary structure comprises 224 residues: Ribulose-phosphate 3-epimerase (224 aa).

Residue Ser8 coordinates substrate. His31, Asp33, and His64 together coordinate a divalent metal cation. Catalysis depends on Asp33, which acts as the Proton acceptor. Substrate-binding positions include His64, 140–143, 173–175, and 195–196; these read GFGG, DGG, and GS. Residue Asp173 coordinates a divalent metal cation. The active-site Proton donor is Asp173.

This sequence belongs to the ribulose-phosphate 3-epimerase family. Requires a divalent metal cation as cofactor.

The catalysed reaction is D-ribulose 5-phosphate = D-xylulose 5-phosphate. It functions in the pathway carbohydrate degradation. Functionally, catalyzes the reversible epimerization of D-ribulose 5-phosphate to D-xylulose 5-phosphate. This Mycobacterium leprae (strain TN) protein is Ribulose-phosphate 3-epimerase.